The sequence spans 272 residues: Shikimate dehydrogenase (NADP(+)) (272 aa).

Shikimate contacts are provided by residues 14 to 16 and Thr61; that span reads SKS. Lys65 serves as the catalytic Proton acceptor. NADP(+) is bound at residue Glu77. Shikimate contacts are provided by Asn86 and Asp102. NADP(+) is bound by residues 126 to 130, 149 to 154, and Met212; these read GAGGA and NRTADK. Tyr214 provides a ligand contact to shikimate. Gly237 is an NADP(+) binding site.

This sequence belongs to the shikimate dehydrogenase family. As to quaternary structure, homodimer.

The enzyme catalyses shikimate + NADP(+) = 3-dehydroshikimate + NADPH + H(+). It participates in metabolic intermediate biosynthesis; chorismate biosynthesis; chorismate from D-erythrose 4-phosphate and phosphoenolpyruvate: step 4/7. Its function is as follows. Involved in the biosynthesis of the chorismate, which leads to the biosynthesis of aromatic amino acids. Catalyzes the reversible NADPH linked reduction of 3-dehydroshikimate (DHSA) to yield shikimate (SA). This Glaesserella parasuis serovar 5 (strain SH0165) (Haemophilus parasuis) protein is Shikimate dehydrogenase (NADP(+)).